The sequence spans 519 residues: Histidine--tRNA ligase (519 aa).

The protein belongs to the class-II aminoacyl-tRNA synthetase family. In terms of assembly, homodimer.

It localises to the cytoplasm. It catalyses the reaction tRNA(His) + L-histidine + ATP = L-histidyl-tRNA(His) + AMP + diphosphate + H(+). The chain is Histidine--tRNA ligase from Rhodopseudomonas palustris (strain BisB18).